Here is a 144-residue protein sequence, read N- to C-terminus: Maximins 6/H10 (144 aa).

Residues M1 to A18 form the signal peptide. A propeptide spanning residues R19–R43 is cleaved from the precursor. N70 carries the asparagine amide modification. A propeptide spanning residues T74–R123 is cleaved from the precursor. The residue at position 143 (L143) is a Leucine amide.

This sequence belongs to the bombinin family. Expressed by the skin glands.

It localises to the secreted. In terms of biological role, maximin-6 shows antimicrobial activity against bacteria and against the fungus C.albicans. It has little hemolytic activity. Maximin-H10 shows antimicrobial activity against bacteria and against the fungus C.albicans. Shows strong hemolytic activity. This is Maximins 6/H10 from Bombina maxima (Giant fire-bellied toad).